The chain runs to 490 residues: Cobyric acid synthase (490 aa).

The 188-residue stretch at 253 to 440 (KLRVAAPAAP…LHGVFDEPAA (188 aa)) folds into the GATase cobBQ-type domain. The Nucleophile role is filled by Cys334. Residue His432 is part of the active site.

It belongs to the CobB/CobQ family. CobQ subfamily.

It participates in cofactor biosynthesis; adenosylcobalamin biosynthesis. Catalyzes amidations at positions B, D, E, and G on adenosylcobyrinic A,C-diamide. NH(2) groups are provided by glutamine, and one molecule of ATP is hydrogenolyzed for each amidation. The chain is Cobyric acid synthase from Chromobacterium violaceum (strain ATCC 12472 / DSM 30191 / JCM 1249 / CCUG 213 / NBRC 12614 / NCIMB 9131 / NCTC 9757 / MK).